Reading from the N-terminus, the 386-residue chain is Patatin group M-3 (386 aa).

Residues 1–23 form the signal peptide; that stretch reads MATTKSFLILFFMILATTSSTCA. Positions 32-229 constitute a PNPLA domain; it reads LSIDGGGIKG…TVGDPALLSL (198 aa). The GXGXXG signature appears at 36–41; sequence GGGIKG. Residues 75–79 carry the GXSXG motif; that stretch reads GTSTG. The active-site Nucleophile is the serine 77. Asparagine 115 carries N-linked (GlcNAc...) asparagine glycosylation. The active-site Proton acceptor is the aspartate 215. A DGA/G motif is present at residues 215-217; it reads DGG. The stretch at 321-384 forms a coiled coil; sequence ENALTGTTTE…DRKKLRANKA (64 aa).

It belongs to the patatin family. As to expression, tuber.

It is found in the vacuole. Functionally, probable lipolytic acyl hydrolase (LAH), an activity which is thought to be involved in the response of tubers to pathogens. The polypeptide is Patatin group M-3 (Solanum tuberosum (Potato)).